The sequence spans 397 residues: MAAVGSGGSNAAAGPGAVSAGSLEPGTASAAHRRLKYISLAVLVVQNASLILSIRYARTLPGDRFFATTAVVMAEVLKGLTCLLLLFAQKRGNVKHLALFLHEAVLVQYVDTLKLAVPSLIYTLQNNLQYVAISNMPAATFQVTYQLKILTTALFSVLMLNRSLSRLQWASLLLLFTGVAIVQAQQAGGGGPRPLDQNPGAGLAAVVASCLSSGFAGVYFEKILKGSSGSVWLRNLQLGLFGTALGLVGLWWAEGTAVARRGFFFGYTPAVWGVVLNQAFGGLLVAVVVKYADNILKGFATSLSIVLSTVASIRLFGFHVDPLFALGAGLVIGAVYLYSLPRGTAKAIASTSASASASTSGPCTHQQPPGQPPPPKLSSHRADLSTEPFLPKSVLVK.

The disordered stretch occupies residues 1-21 (MAAVGSGGSNAAAGPGAVSAG). Transmembrane regions (helical) follow at residues 3–23 (AVGS…AGSL), 37–57 (YISL…IRYA), 65–85 (FFAT…CLLL), 97–117 (LALF…KLAV), 140–160 (TFQV…VLML), 169–189 (WASL…QAGG), 200–220 (GAGL…GVYF), 238–258 (LGLF…GTAV), 269–289 (PAVW…AVVV), and 315–335 (LFGF…IGAV). Residues 9–21 (SNAAAGPGAVSAG) show a composition bias toward low complexity. The segment at 355 to 397 (ASASTSGPCTHQQPPGQPPPPKLSSHRADLSTEPFLPKSVLVK) is disordered.

This sequence belongs to the nucleotide-sugar transporter family. SLC35A subfamily. Interacts with SLC35A3; the interaction is reduced in the presence of SLC35A4. Found in a complex with SLC35A3 and SLC35A4.

The protein resides in the golgi apparatus membrane. The catalysed reaction is UMP(out) + UDP-alpha-D-galactose(in) = UMP(in) + UDP-alpha-D-galactose(out). It carries out the reaction UDP-N-acetyl-alpha-D-galactosamine(in) + UMP(out) = UDP-N-acetyl-alpha-D-galactosamine(out) + UMP(in). The enzyme catalyses UMP(out) + UDP-alpha-D-glucose(in) = UMP(in) + UDP-alpha-D-glucose(out). It catalyses the reaction UMP(out) + UDP-N-acetyl-alpha-D-glucosamine(in) = UMP(in) + UDP-N-acetyl-alpha-D-glucosamine(out). The catalysed reaction is UDP-alpha-D-galactose(in) + AMP(out) = UDP-alpha-D-galactose(out) + AMP(in). It carries out the reaction UDP-alpha-D-galactose(in) + CMP(out) = UDP-alpha-D-galactose(out) + CMP(in). The enzyme catalyses UDP-N-acetyl-alpha-D-galactosamine(out) + UDP-alpha-D-galactose(in) = UDP-N-acetyl-alpha-D-galactosamine(in) + UDP-alpha-D-galactose(out). It catalyses the reaction UDP-N-acetyl-alpha-D-glucosamine(out) + UDP-alpha-D-galactose(in) = UDP-N-acetyl-alpha-D-glucosamine(in) + UDP-alpha-D-galactose(out). The catalysed reaction is UDP-alpha-D-galactose(in) + UDP-alpha-D-glucose(out) = UDP-alpha-D-galactose(out) + UDP-alpha-D-glucose(in). It carries out the reaction UMP(out) + CMP(in) = UMP(in) + CMP(out). The enzyme catalyses UMP(out) + AMP(in) = UMP(in) + AMP(out). In terms of biological role, transports uridine diphosphate galactose (UDP-galactose) from the cytosol into the Golgi apparatus, functioning as an antiporter that exchanges UDP-galactose for UMP. It is also able to exchange UDP-galactose for AMP and CMP, and to transport UDP-N-acetylgalactosamine (UDP-GalNAc) and other nucleotide sugars. As a provider of UDP-galactose to galactosyltransferases present in the Golgi apparatus, it is necessary for globotriaosylceramide/globoside (Gb3Cer) synthesis from lactosylceramide. This chain is UDP-galactose translocator, found in Canis lupus familiaris (Dog).